We begin with the raw amino-acid sequence, 257 residues long: NAD kinase (257 aa).

The active-site Proton acceptor is the aspartate 46. NAD(+)-binding positions include 46–47 (DG), histidine 51, 116–117 (NE), aspartate 146, alanine 154, 157–162 (TAYNLS), and glutamine 218.

This sequence belongs to the NAD kinase family. The cofactor is a divalent metal cation.

It localises to the cytoplasm. The catalysed reaction is NAD(+) + ATP = ADP + NADP(+) + H(+). Involved in the regulation of the intracellular balance of NAD and NADP, and is a key enzyme in the biosynthesis of NADP. Catalyzes specifically the phosphorylation on 2'-hydroxyl of the adenosine moiety of NAD to yield NADP. The chain is NAD kinase from Rhizobium meliloti (strain 1021) (Ensifer meliloti).